A 91-amino-acid chain; its full sequence is Small ribosomal subunit protein uS19 (91 aa).

This sequence belongs to the universal ribosomal protein uS19 family.

Functionally, protein S19 forms a complex with S13 that binds strongly to the 16S ribosomal RNA. In Saccharophagus degradans (strain 2-40 / ATCC 43961 / DSM 17024), this protein is Small ribosomal subunit protein uS19.